We begin with the raw amino-acid sequence, 234 residues long: MHFSPALKSGKLLKRYKRFLADIQLEDGTEITLHCPNTGSMRNCLFPGETVWFSTSNNPKRKYAHTWELMTTPTGGLIGIHSGNANALVEEALNKGVITELVGYDSLSREVKYGDENSRIDILLEAAQKPACYIEVKSCTLLEDGQGYFPDAVSLRGQKHLRELMHMASLGHRAVLLFVVQHTDIHSVAPAAHIDPEYANLLKKAVLSGVEVLAYRCEISASEIHLAHACPVRV.

This sequence belongs to the SfsA family.

This is Sugar fermentation stimulation protein homolog from Shewanella sp. (strain ANA-3).